A 149-amino-acid chain; its full sequence is Ribonuclease pancreatic (149 aa).

A signal peptide spans methionine 1–glycine 25. Residues alanine 30–threonine 49 are disordered. Substrate-binding residues include lysine 32 and arginine 35. Residue histidine 37 is the Proton acceptor of the active site. The segment covering aspartate 39–threonine 49 has biased composition (polar residues). Intrachain disulfides connect cysteine 51–cysteine 109, cysteine 65–cysteine 120, cysteine 83–cysteine 135, and cysteine 90–cysteine 97. Lysine 66 to threonine 70 is a binding site for substrate. Asparagine 87 is a glycosylation site (N-linked (GlcNAc...) asparagine). Position 91 (lysine 91) interacts with substrate. Histidine 144 functions as the Proton donor in the catalytic mechanism.

Belongs to the pancreatic ribonuclease family. In terms of assembly, monomer. Interacts with and forms tight 1:1 complexes with RNH1. Dimerization of two such complexes may occur. Interaction with RNH1 inhibits this protein. Pancreas.

It is found in the secreted. The enzyme catalyses an [RNA] containing cytidine + H2O = an [RNA]-3'-cytidine-3'-phosphate + a 5'-hydroxy-ribonucleotide-3'-[RNA].. The catalysed reaction is an [RNA] containing uridine + H2O = an [RNA]-3'-uridine-3'-phosphate + a 5'-hydroxy-ribonucleotide-3'-[RNA].. Functionally, endonuclease that catalyzes the cleavage of RNA on the 3' side of pyrimidine nucleotides. Acts on single-stranded and double-stranded RNA. The sequence is that of Ribonuclease pancreatic (Rnase1) from Mus pahari (Gairdner's shrew-mouse).